Reading from the N-terminus, the 1605-residue chain is MAQKPEEQLKELGSKLDLAPVSKDSLLKLLKEAAVCLSELEQSPPPAVLKSIQPFLDAVIKPEILNHQDKDVKLLVASCVSEITRITAPEAPYSDNIMKDIFQLIVSAFAGLNDVSGPSFGRRVLILETVAKYRSCVVMLDLECDDLVKEVFTTFLDVARDDHPEIVFSSMQNIMIVLLEESEDVQEHLLLILLSKLGRNRSDVRDAARRLAMKVIEHCAPKVESDIKQFLISSMSGDSRFSSSQIDYHEVIYDLYRCAPQALSGVAPYLTGELLADKLETRLKVVGLVGELFSLPGRVISEEFDSIFLEFLKRLTDRVVEVRMAILDHIKDCLLSDPLRAEASQIISALCDRLLDYDENIRKQVVAVICDVSVSALTSIPVDTMKLVAERLRDKAILVKTYTMERLTELFRVYCLRCADGKVDTGDFNWIPGKILRCLYDKDFRSDTIEYILCSSLFPSDFSVRDKVKHWIQIFSGFDKVETKAFEKILEQRQRIQQEMQRYLSIKQTQQTADAPEIQKKILFGFRVMSRAFSDPPKTEQNFLILDQLKDANIWKILTNLLDPNTSITQASRIRDDMLKILSEKHSLYDFLSTLSIKCSYLLFSKEYVKEILAEVSVRKSSKNTLGIQPCMDFLGLLACFCPSLFDGAEEELISFLKDDDEMMKEGTLKILAKAGGTIRENLIVLASSVDLLLERICVEGNRKQAKYAVHALASITKDDGLKSLSVLYKRLVDMLEDKRYQPAVLQCLGCIAQIAMPVYETRESEVVEFIRSKILKLKSETVDDKKLSWDDKSEICQLKIYGIKTLVKSYLPFKDAQLRAGVDDLLGILKNILSFGEVSEDLESSSVDKAHLRLAAAKAVLRLSRHWDDKIPIEIFHLTLKTPEIPFPTAKKIFLGKVHQYVKDRVLEMKYACSFLFDITGSNVLESEEDKHNLADIIQHSYQTKVRKISAQTDANSVTLYPHHILPYLVHALAHHSCPDVEKCKDVKEYEMIYRQLYLIISMLLHKEEDGKTEDIDKEREYVPTIILIFHSIKQSEDVTDATKSKNSHAICELGLSIINHLTQKEPDLQGEITPVSLPPTLYKPSEKVEGDKSQVGEEKLWLADETVLLHFRALKLESHADASVIPQTSENEVMIDGESDGNEIPLGKIVERLRAQGTKTRKGKKNKSVPAEDENGKNDVDVLKMVREINLDHLQMLDKFESSNGHKHSPSERAEICQRDQKGNKRNVGDATSVVSVPKRRRSSSGHSPYKFSNSGPKVQLKASEDELHLESDMDKNVSLDSHDENSDQEKMLESISPRKRKKSLSSKLKITESDWALTDVERSRSAGGGDSKLKSASGSMKKRKNVSGLAKCSTKENKLVNDELIGCRIEVWWPMDKRFYEGTVKSYDSTKQRHVILYEDGDVEVLNLKKEQWELIDTGGKTAKKSRTSKGNSKKKRSSGSKPKNPDGVQRDEDPVTTTPKGKRTPKKNLKQLHPKDTPKSLSLEHEKVESRNKKRRSSALPKTEYSGEAGEEKSESEGKSLKEGEDDEEVVNKEEDLQEAKTESSGDAEGKEAEHDDSDTEGKQENNEMEREAEENAETSDNETLGAWKSKVGKSISRTAI.

14 HEAT repeats span residues 50 to 89, 96 to 136, 146 to 183, 184 to 221, 261 to 298, 302 to 339, 341 to 378, 380 to 416, 552 to 591, 644 to 681, 723 to 758, 821 to 860, 961 to 1000, and 1050 to 1088; these read KSIQ…ITAP, NIMK…YRSC, DLVK…EESE, DVQE…HCAP, QALS…LPGR, EEFD…SDPL, AEAS…SALT, IPVD…VYCL, ANIW…LYDF, SLFD…TIRE, KSLS…IAMP, AGVD…AAKA, LYPH…QLYL, and HAIC…KPSE. Disordered regions lie at residues 1155–1182 and 1203–1262; these read LRAQ…KNDV and ESSN…PKVQ. Over residues 1211 to 1225 the composition is skewed to basic and acidic residues; it reads SPSERAEICQRDQKG. Residues 1226–1233 carry the Nuclear localization signal 1 motif; the sequence is NKRNVGDA. A Phosphoserine modification is found at Ser1274. Residues 1279-1295 show a composition bias toward basic and acidic residues; the sequence is NVSLDSHDENSDQEKML. Disordered regions lie at residues 1279–1307, 1324–1353, and 1423–1605; these read NVSL…KKSL, ERSR…SGLA, and GKTA…RTAI. Ser1299 is subject to Phosphoserine. Composition is skewed to basic residues over residues 1425 to 1442 and 1464 to 1476; these read TAKK…KRSS and KGKR…LKQL. Residues 1426 to 1433 carry the Nuclear localization signal 2 motif; that stretch reads AKKSRTSK. 3 stretches are compositionally biased toward basic and acidic residues: residues 1477-1495, 1514-1527, and 1534-1574; these read HPKD…VESR, GEEK…SLKE, and VVNK…NEME. 3 positions are modified to phosphoserine: Ser1524, Ser1562, and Ser1584. The segment covering 1575 to 1585 has biased composition (acidic residues); sequence REAEENAETSD. At Thr1588 the chain carries Phosphothreonine.

This sequence belongs to the PDS5 family. In terms of assembly, interacts with the cohesin complex. Interacts with DEK3.

Its subcellular location is the nucleus. In terms of biological role, cohesin cofactor dispensable during the meiotic division but playing an important role in DNA repair by homologous recombination (HR) probably by helping SMC5/SMC6 complex. Regulator of sister chromatid cohesion in mitosis which may stabilize cohesin complex association with chromatin. May couple sister chromatid cohesion during mitosis to DNA replication. Cohesion ensures that chromosome partitioning is accurate in both meiotic and mitotic cells and plays an important role in DNA repair. This chain is Sister chromatid cohesion protein PDS5 homolog A, found in Arabidopsis thaliana (Mouse-ear cress).